A 693-amino-acid chain; its full sequence is Polyribonucleotide nucleotidyltransferase (693 aa).

The Mg(2+) site is built by D486 and D492. The region spanning 553 to 612 is the KH domain; sequence PRFSSMRIDTEKIKDVIGKGGATIRSITEQTGTTIEIEDDGSVKIAATDKAAAANARRLI. Residues 622–690 form the S1 motif domain; that stretch reads GRIYDAKVTK…RQGRVRLSIK (69 aa).

Belongs to the polyribonucleotide nucleotidyltransferase family. As to quaternary structure, component of the RNA degradosome, which is a multiprotein complex involved in RNA processing and mRNA degradation. Mg(2+) serves as cofactor.

It localises to the cytoplasm. The enzyme catalyses RNA(n+1) + phosphate = RNA(n) + a ribonucleoside 5'-diphosphate. Its function is as follows. Involved in mRNA degradation. Catalyzes the phosphorolysis of single-stranded polyribonucleotides processively in the 3'- to 5'-direction. This Dichelobacter nodosus (strain VCS1703A) protein is Polyribonucleotide nucleotidyltransferase.